A 222-amino-acid chain; its full sequence is Secreted protein D (222 aa).

Positions 1 to 22 (MKIYYLFFVLIYLIYFINLVYC) are cleaved as a signal peptide. N-linked (GlcNAc...) asparagine glycosylation occurs at Asn25.

This sequence belongs to the Sct family.

The protein resides in the secreted. This is Secreted protein D from Dictyostelium discoideum (Social amoeba).